A 310-amino-acid chain; its full sequence is Porphobilinogen deaminase (310 aa).

S-(dipyrrolylmethanemethyl)cysteine is present on Cys241.

This sequence belongs to the HMBS family. As to quaternary structure, monomer. Dipyrromethane serves as cofactor.

It catalyses the reaction 4 porphobilinogen + H2O = hydroxymethylbilane + 4 NH4(+). It functions in the pathway porphyrin-containing compound metabolism; protoporphyrin-IX biosynthesis; coproporphyrinogen-III from 5-aminolevulinate: step 2/4. Its function is as follows. Tetrapolymerization of the monopyrrole PBG into the hydroxymethylbilane pre-uroporphyrinogen in several discrete steps. This Lysinibacillus sphaericus (strain C3-41) protein is Porphobilinogen deaminase.